The following is a 334-amino-acid chain: N-acetyl-gamma-glutamyl-phosphate reductase (334 aa).

Cys-154 is a catalytic residue.

It belongs to the NAGSA dehydrogenase family. Type 1 subfamily.

The protein resides in the cytoplasm. The enzyme catalyses N-acetyl-L-glutamate 5-semialdehyde + phosphate + NADP(+) = N-acetyl-L-glutamyl 5-phosphate + NADPH + H(+). Its pathway is amino-acid biosynthesis; L-arginine biosynthesis; N(2)-acetyl-L-ornithine from L-glutamate: step 3/4. Catalyzes the NADPH-dependent reduction of N-acetyl-5-glutamyl phosphate to yield N-acetyl-L-glutamate 5-semialdehyde. This chain is N-acetyl-gamma-glutamyl-phosphate reductase, found in Buchnera aphidicola subsp. Acyrthosiphon pisum (strain 5A).